Reading from the N-terminus, the 843-residue chain is Transmembrane protease serine 7 (843 aa).

Residues 1–76 (MDKENSDVSA…KVPFWNVQNK (76 aa)) are Cytoplasmic-facing. The segment at 27 to 67 (AQKKLPVRRPPLPGRRLPLPGRRPPQRPIGKAKPKKQSKKK) is disordered. Basic residues predominate over residues 56 to 67 (GKAKPKKQSKKK). Residues 77–97 (IILFTVFLFILAVIAWTLLWL) form a helical; Signal-anchor for type II membrane protein membrane-spanning segment. Over 98–843 (YISKTESKDA…WIHKYVPSLL (746 aa)) the chain is Extracellular. The SEA domain occupies 106 to 234 (DAFYFAGMFR…DSVVLNAGLR (129 aa)). Intrachain disulfides connect Cys-247–Cys-273, Cys-299–Cys-322, Cys-365–Cys-396, Cys-484–Cys-496, Cys-491–Cys-509, Cys-503–Cys-518, Cys-525–Cys-544, Cys-538–Cys-553, Cys-559–Cys-571, Cys-566–Cys-585, Cys-579–Cys-594, and Cys-631–Cys-647. CUB domains are found at residues 247–360 (CSQY…FEVI) and 365–481 (CENT…YNIS). 3 LDL-receptor class A domains span residues 483–519 (PCPVGSFRCSSGLCVPQAQRCDGVNDCFDESDELFCV), 517–554 (FCVSPQPACNTSSFRQHGPLICDGFRDCENGRDEQNCT), and 558–595 (PCNNRTFKCGNDICFRKQNAKCDGTVDCPDGSDEEGCT). In terms of domain architecture, Peptidase S1 spans 606 to 840 (IIGGTDTLEG…FVPWIHKYVP (235 aa)). Catalysis depends on charge relay system residues His-646 and Asp-694. Intrachain disulfides connect Cys-730–Cys-796 and Cys-762–Cys-775. The active-site Charge relay system is Ser-790.

The protein belongs to the peptidase S1 family. Forms a heterodimer with SERPINA5. N-glycosylated. Expressed in brain, ovary, testis, salivary gland, trachea and lung.

The protein localises to the cell membrane. Its function is as follows. Serine protease which preferentially hydrolyzes peptides with Arg at the P1 position. This is Transmembrane protease serine 7 (TMPRSS7) from Homo sapiens (Human).